Consider the following 155-residue polypeptide: 2-C-methyl-D-erythritol 2,4-cyclodiphosphate synthase (155 aa).

Asp8 and His10 together coordinate a divalent metal cation. Residues 8–10 (DVH) and 34–35 (HS) contribute to the 4-CDP-2-C-methyl-D-erythritol 2-phosphate site. His42 contributes to the a divalent metal cation binding site. Residues 56-58 (DIG), 61-65 (FPDSD), 100-106 (AQKPKML), 132-135 (TTEE), Phe139, and Lys142 contribute to the 4-CDP-2-C-methyl-D-erythritol 2-phosphate site.

The protein belongs to the IspF family. In terms of assembly, homotrimer. The cofactor is a divalent metal cation.

It catalyses the reaction 4-CDP-2-C-methyl-D-erythritol 2-phosphate = 2-C-methyl-D-erythritol 2,4-cyclic diphosphate + CMP. The protein operates within isoprenoid biosynthesis; isopentenyl diphosphate biosynthesis via DXP pathway; isopentenyl diphosphate from 1-deoxy-D-xylulose 5-phosphate: step 4/6. Its function is as follows. Involved in the biosynthesis of isopentenyl diphosphate (IPP) and dimethylallyl diphosphate (DMAPP), two major building blocks of isoprenoid compounds. Catalyzes the conversion of 4-diphosphocytidyl-2-C-methyl-D-erythritol 2-phosphate (CDP-ME2P) to 2-C-methyl-D-erythritol 2,4-cyclodiphosphate (ME-CPP) with a corresponding release of cytidine 5-monophosphate (CMP). This chain is 2-C-methyl-D-erythritol 2,4-cyclodiphosphate synthase, found in Clostridium botulinum (strain ATCC 19397 / Type A).